Reading from the N-terminus, the 1230-residue chain is DNA-directed RNA polymerase, mitochondrial (1230 aa).

The N-terminal 41 residues, 1–41 (MSALCWGRGAAGLKRALRPCGRPGLPGKEGTAGGVCGPRRS), are a transit peptide targeting the mitochondrion. 3 disordered regions span residues 18-55 (RPCGRPGLPGKEGTAGGVCGPRRSSSASPQEQDQDRRK), 95-115 (GSGDGSLQPPRKVQMGAKDAT), and 731-750 (VPAPPSEAPQPPEAHLPHSA). Pro residues predominate over residues 732 to 744 (PAPPSEAPQPPEA). Positions 802-1230 (FRGRTYPCPP…QVKRSTYFFS (429 aa)) are mediates interaction with TEFM. Catalysis depends on residues Asp922, Lys991, and Asp1151.

This sequence belongs to the phage and mitochondrial RNA polymerase family. As to quaternary structure, homodimer. Component of the mitochondrial transcription initiation complex, composed at least of TFB2M, TFAM and POLRMT. In this complex TFAM recruits POLRMT to the promoter whereas TFB2M induces structural changes in POLRMT to enable promoter opening and trapping of the DNA non-template strand. Upon metabolic stress, forms a complex composed of FOXO3, SIRT3 and mitochondrial RNA polymerase POLRMT; the complex is recruited to mtDNA in a SIRT3-dependent manner. Also forms a complex composed of FOXO3, SIRT3, TFAM and POLRMT. Interacts with TFB1M and TFB2M, leading to the stimulation of transcription. Interacts with TEFM. Interacts with MTRES1.

The protein resides in the mitochondrion. The catalysed reaction is RNA(n) + a ribonucleoside 5'-triphosphate = RNA(n+1) + diphosphate. In terms of biological role, DNA-dependent RNA polymerase catalyzes the transcription of mitochondrial DNA into RNA using the four ribonucleoside triphosphates as substrates. Component of the mitochondrial transcription initiation complex, composed at least of TFB2M, TFAM and POLRMT that is required for basal transcription of mitochondrial DNA. In this complex, TFAM recruits POLRMT to a specific promoter whereas TFB2M induces structural changes in POLRMT to enable promoter opening and trapping of the DNA non-template strand. Has DNA primase activity. Catalyzes the synthesis of short RNA primers that are necessary for the initiation of lagging-strand DNA synthesis from the origin of light-strand DNA replication (OriL). This Homo sapiens (Human) protein is DNA-directed RNA polymerase, mitochondrial.